We begin with the raw amino-acid sequence, 989 residues long: ATP-dependent 6-phosphofructokinase subunit alpha (989 aa).

The tract at residues 1–585 (MPEPSISALS…SYESFLSVSK (585 aa)) is N-terminal catalytic PFK domain 1. Residues glycine 220, 283–284 (RS), and 313–316 (GDGS) contribute to the ATP site. Aspartate 314 contributes to the Mg(2+) binding site. Beta-D-fructose 6-phosphate is bound by residues 359-361 (SID), arginine 396, 403-405 (MGR), glutamate 460, arginine 487, and 493-496 (HVQR). Catalysis depends on aspartate 361, which acts as the Proton acceptor. Residues 586–599 (YDDGSYLVPESSRL) form an interdomain linker region. The segment at 600 to 989 (NIAIIHVGAP…LSGRLSIRTT (390 aa)) is C-terminal regulatory PFK domain 2. Beta-D-fructose 2,6-bisphosphate-binding positions include arginine 670, 727-731 (TVSNN), arginine 765, 772-774 (QGG), glutamate 832, arginine 858, 864-867 (HVQQ), and arginine 963.

It belongs to the phosphofructokinase type A (PFKA) family. ATP-dependent PFK group I subfamily. Eukaryotic two domain clade 'E' sub-subfamily. In terms of assembly, heterododecamer of 4 alpha, 4 beta and 4 gamma chains. The gamma chain bridges the N-terminal halves of the alpha and beta subunits. Mg(2+) serves as cofactor.

The protein resides in the cytoplasm. The catalysed reaction is beta-D-fructose 6-phosphate + ATP = beta-D-fructose 1,6-bisphosphate + ADP + H(+). Its pathway is carbohydrate degradation; glycolysis; D-glyceraldehyde 3-phosphate and glycerone phosphate from D-glucose: step 3/4. With respect to regulation, allosterically activated by ADP, AMP, or fructose 2,6-bisphosphate, and allosterically inhibited by ATP or citrate. In terms of biological role, catalyzes the phosphorylation of D-fructose 6-phosphate to fructose 1,6-bisphosphate by ATP, the first committing step of glycolysis. Involved in the modulation of glucose-induced microautophagy of peroxisomes independent of its ability to metabolize glucose intermediates. The chain is ATP-dependent 6-phosphofructokinase subunit alpha (PFK1) from Komagataella phaffii (strain GS115 / ATCC 20864) (Yeast).